The sequence spans 145 residues: LIM domain only protein 3 (145 aa).

LIM zinc-binding domains lie at Lys11–Val73 and Gly75–Lys137.

This is LIM domain only protein 3 from Danio rerio (Zebrafish).